The chain runs to 503 residues: Cardiolipin synthase (503 aa).

3 helical membrane passes run 5 to 25 (LNVLLFLLILSTGLYLTRSFW), 29 to 49 (IVGAFSVLITITVVFIGIVIF), and 59 to 79 (LTWLMVLAVFPVVGFIFYLMF). PLD phosphodiesterase domains follow at residues 238–265 (INYRNHRKIIVIDGTVGFVGGLNIGDEY) and 416–443 (TRGFLHSKIIIVDNEIASIGTSNMDMRS). Catalysis depends on residues His243, Lys245, Asp250, His421, Lys423, and Asp428.

Belongs to the phospholipase D family. Cardiolipin synthase subfamily.

The protein localises to the cell membrane. The enzyme catalyses 2 a 1,2-diacyl-sn-glycero-3-phospho-(1'-sn-glycerol) = a cardiolipin + glycerol. Catalyzes the reversible phosphatidyl group transfer from one phosphatidylglycerol molecule to another to form cardiolipin (CL) (diphosphatidylglycerol) and glycerol. In Halalkalibacterium halodurans (strain ATCC BAA-125 / DSM 18197 / FERM 7344 / JCM 9153 / C-125) (Bacillus halodurans), this protein is Cardiolipin synthase (cls).